Reading from the N-terminus, the 423-residue chain is AUGMIN subunit 4 (423 aa).

The stretch at 267 to 287 forms a coiled coil; it reads IEEIERDEAALREDLYSADRK.

It belongs to the HAUS4 family. As to quaternary structure, part of the augmin complex composed of 8 subunits. The complex acts on microtubules and interacts with gamma-tubulin in spindles and the phragmoplast.

Its subcellular location is the cytoplasm. It is found in the cytoskeleton. The protein localises to the spindle. The protein resides in the phragmoplast. Involved in microtubules reorganization during spindle and phragmoplast development. In Arabidopsis thaliana (Mouse-ear cress), this protein is AUGMIN subunit 4 (AUG4).